Consider the following 121-residue polypeptide: Large ribosomal subunit protein bL12 (121 aa).

This sequence belongs to the bacterial ribosomal protein bL12 family. As to quaternary structure, homodimer. Part of the ribosomal stalk of the 50S ribosomal subunit. Forms a multimeric L10(L12)X complex, where L10 forms an elongated spine to which 2 to 4 L12 dimers bind in a sequential fashion. Binds GTP-bound translation factors.

Forms part of the ribosomal stalk which helps the ribosome interact with GTP-bound translation factors. Is thus essential for accurate translation. The chain is Large ribosomal subunit protein bL12 from Proteus mirabilis (strain HI4320).